Reading from the N-terminus, the 211-residue chain is Large ribosomal subunit protein uL3 (211 aa).

Residues 135–155 form a disordered region; the sequence is THGNSLSHRAPGSIGQNQSPG. Glutamine 152 carries the N5-methylglutamine modification.

It belongs to the universal ribosomal protein uL3 family. As to quaternary structure, part of the 50S ribosomal subunit. Forms a cluster with proteins L14 and L19. Post-translationally, methylated by PrmB.

One of the primary rRNA binding proteins, it binds directly near the 3'-end of the 23S rRNA, where it nucleates assembly of the 50S subunit. This Pseudoalteromonas translucida (strain TAC 125) protein is Large ribosomal subunit protein uL3.